The sequence spans 403 residues: Acetate kinase (403 aa).

Asn-9 is a Mg(2+) binding site. Lys-16 contacts ATP. Arg-93 serves as a coordination point for substrate. Asp-150 acts as the Proton donor/acceptor in catalysis. ATP contacts are provided by residues 210-214, 284-286, and 332-336; these read HLGNG, DFR, and GVGEN. Glu-388 is a Mg(2+) binding site.

It belongs to the acetokinase family. As to quaternary structure, homodimer. It depends on Mg(2+) as a cofactor. Requires Mn(2+) as cofactor.

It localises to the cytoplasm. It catalyses the reaction acetate + ATP = acetyl phosphate + ADP. It participates in metabolic intermediate biosynthesis; acetyl-CoA biosynthesis; acetyl-CoA from acetate: step 1/2. In terms of biological role, catalyzes the formation of acetyl phosphate from acetate and ATP. Can also catalyze the reverse reaction. In Corynebacterium jeikeium (strain K411), this protein is Acetate kinase.